The following is a 353-amino-acid chain: MLARAARGTGALLLRGSVQASGRVPRRASSGLPRNTVILFVPQQEAWVVERMGRFHRILEPGLNVLIPVLDRIRYVQSLKEIVINVPEQSAVTLDNVTLQIDGVLYLRIMDPYKASYGVEDPEYAVTQLAQTTMRSELGKLSLDKVFRERESLNANIVDAINQAADCWGIRCLRYEIKDIHVPPRVKESMQMQVEAERRKRATVLESEGTRESAINVAEGKKQAQILASEAEKAEQINQAAGEASAVLAKAKAKAEAIRILAGALTQHNGDAAASLTVAEQYVSAFSKLAKDSNTVLLPSNPSDVTSMVAQAMGVYGALTKAPVPGAQNSSQSRRDVQATDTSIEELGRVKLS.

A mitochondrion-targeting transit peptide spans 1-28 (MLARAARGTGALLLRGSVQASGRVPRRA). At Ser17 the chain carries Phosphoserine; by PKC/PRKCZ. Tyr124 carries the post-translational modification Phosphotyrosine. At Lys145 the chain carries N6-acetyllysine; alternate. Residue Lys145 is modified to N6-succinyllysine; alternate. Positions 215-252 (INVAEGKKQAQILASEAEKAEQINQAAGEASAVLAKAK) form a coiled coil. Lys233 carries the N6-acetyllysine modification. The disordered stretch occupies residues 324–353 (VPGAQNSSQSRRDVQATDTSIEELGRVKLS). Position 330 is a phosphoserine (Ser330).

Belongs to the band 7/mec-2 family. Forms homooligomers. Interacts with MFN2; may form heterooligomers. Interacts with PHB1 and PHB2; recruits them to cardiolipin-enriched mitochondrial membranes and stabilizes them. Interacts with CACNA2D2.

The protein localises to the cell membrane. Its subcellular location is the mitochondrion. It is found in the mitochondrion inner membrane. It localises to the mitochondrion intermembrane space. The protein resides in the membrane raft. The protein localises to the cytoplasm. Its subcellular location is the cytoskeleton. Mitochondrial protein that probably regulates the biogenesis and the activity of mitochondria. Stimulates cardiolipin biosynthesis, binds cardiolipin-enriched membranes where it recruits and stabilizes some proteins including prohibitin and may therefore act in the organization of functional microdomains in mitochondrial membranes. Through regulation of the mitochondrial function may play a role into several biological processes including cell migration, cell proliferation, T-cell activation, calcium homeostasis and cellular response to stress. May play a role in calcium homeostasis through negative regulation of calcium efflux from mitochondria. Required for mitochondrial hyperfusion a pro-survival cellular response to stress which results in increased ATP production by mitochondria. May also regulate the organization of functional domains at the plasma membrane and play a role in T-cell activation through association with the T-cell receptor signaling complex and its regulation. This is Stomatin-like protein 2, mitochondrial (Stoml2) from Mus musculus (Mouse).